The following is a 182-amino-acid chain: Peptidoglycan recognition protein 1 (182 aa).

A signal peptide spans 1-18; the sequence is MLFACALLALLGLATSCS. Intrachain disulfides connect Cys17–Cys141, Cys33–Cys78, and Cys54–Cys60. Residues 39 to 167 enclose the N-acetylmuramoyl-L-alanine amidase domain; that stretch reads HPVRYVVISH…RDVQSTLSPG (129 aa).

It belongs to the N-acetylmuramoyl-L-alanine amidase 2 family. Homodimer; disulfide-linked. Interacts with HSPA1A; this interaction forms a cytotoxic complex that is released by lymphokine-activated killer cells. Interacts with HSPBP1; this interaction blocks the cytotoxic activity of the PGLYRP1-HSPA1A complex. As to expression, strongly expressed in spleen and lung. Also detected in brain and thymus. In the lung, expressed in the intraalveolar space, in the brain, expressed in the Purkinje cells of the cerebellum and in certain layers of neurons in the hippocampus. Also detected in cells filling the space within the intestinal villus.

The protein resides in the cytoplasm. It is found in the secreted. Innate immunity protein that plays several important functions in antimicrobial and antitumor defense systems. Acts as a pattern receptor that binds to murein peptidoglycans (PGN) of Gram-positive bacteria and thus provides bactericidal activity. Forms an equimolar complex with heat shock protein HSPA1A and induces programmed cell death through apoptosis and necroptosis in tumor cell lines by activating the TNFR1 receptor on the target cell membrane. In addition, acts in complex with the Ca(2+)-binding protein S100A4 as a chemoattractant able to induce lymphocyte movement. Mechanistically, this complex acts as a ligand of the chemotactic receptors CCR5 and CXCR3 which are present on the cells of the immune system. Also promotes the activation of lymphocytes that become able to kill virus-infected cells as well as tumor cells by modulating the spectrum of their target-cell specificity. Induction of cytotoxicity on monocyte surface requires interaction with TREM1 receptor. This Mus musculus (Mouse) protein is Peptidoglycan recognition protein 1 (Pglyrp1).